We begin with the raw amino-acid sequence, 78 residues long: Omega-conotoxin-like Ac6.5 (78 aa).

Positions 1-22 (MKLTCVVIVAVLLLTACQLLTA) are cleaved as a signal peptide. Residues 23-42 (DDSRGTQKHRSLRSTTKVSK) constitute a propeptide that is removed on maturation. Disulfide bonds link Cys-46–Cys-62, Cys-53–Cys-65, and Cys-61–Cys-72. 2 positions are modified to 4-hydroxyproline: Pro-55 and Pro-67.

The protein belongs to the conotoxin O1 superfamily. As to expression, expressed by the venom duct.

The protein localises to the secreted. Functionally, omega-conotoxins act at presynaptic membranes, they bind and block voltage-gated calcium channels (Cav). The chain is Omega-conotoxin-like Ac6.5 from Conus achatinus (Little frog cone).